Here is a 152-residue protein sequence, read N- to C-terminus: Transcriptional regulator MraZ (152 aa).

2 SpoVT-AbrB domains span residues 5 to 52 (ATLV…PLPA) and 81 to 124 (ASEC…DEQT).

The protein belongs to the MraZ family. In terms of assembly, forms oligomers.

It localises to the cytoplasm. The protein resides in the nucleoid. In terms of biological role, negatively regulates its own expression and that of the subsequent genes in the proximal part of the division and cell wall (dcw) gene cluster. Acts by binding directly to DNA. May also regulate the expression of genes outside the dcw cluster. In Sodalis glossinidius (strain morsitans), this protein is Transcriptional regulator MraZ.